The following is a 209-amino-acid chain: Outer-membrane lipoprotein LolB (209 aa).

A signal peptide spans 1 to 17 (MATVFSRALGALVLGVA). A lipid anchor (N-palmitoyl cysteine) is attached at Cys18. Cys18 carries the S-diacylglycerol cysteine lipid modification.

This sequence belongs to the LolB family. Monomer.

The protein resides in the cell outer membrane. In terms of biological role, plays a critical role in the incorporation of lipoproteins in the outer membrane after they are released by the LolA protein. The polypeptide is Outer-membrane lipoprotein LolB (Ralstonia nicotianae (strain ATCC BAA-1114 / GMI1000) (Ralstonia solanacearum)).